A 475-amino-acid polypeptide reads, in one-letter code: Ribulose bisphosphate carboxylase large chain (475 aa).

Positions 1–2 are excised as a propeptide; the sequence is MS. At proline 3 the chain carries N-acetylproline. The substrate site is built by threonine 65, asparagine 123, and threonine 173. The active-site Proton acceptor is the lysine 175. Lysine 177 lines the substrate pocket. Lysine 201, aspartate 203, and glutamate 204 together coordinate Mg(2+). An N6-carboxylysine modification is found at lysine 201. The substrate site is built by glutamate 204, histidine 294, arginine 295, histidine 327, lysine 334, serine 379, glycine 381, glycine 403, and glycine 404. Histidine 294 serves as the catalytic Proton acceptor.

This sequence belongs to the RuBisCO large chain family. Type I subfamily. As to quaternary structure, heterohexadecamer of 8 large chains and 8 small chains. Mg(2+) serves as cofactor. The disulfide bond which can form between Cys-247 in the large chain dimeric partners within the hexadecamer appears to be associated with oxidative stress and protein turnover. The disulfide bonds reported in 1RBO may be the result of oxidation during crystallization.

The protein resides in the plastid. Its subcellular location is the chloroplast. It catalyses the reaction 2 (2R)-3-phosphoglycerate + 2 H(+) = D-ribulose 1,5-bisphosphate + CO2 + H2O. The enzyme catalyses D-ribulose 1,5-bisphosphate + O2 = 2-phosphoglycolate + (2R)-3-phosphoglycerate + 2 H(+). With respect to regulation, abscisic acid (ABA) causes weak inhibition of RuBisCO catalytic activity, but more potent inhibition of RuBisCO activation. RuBisCO catalyzes two reactions: the carboxylation of D-ribulose 1,5-bisphosphate, the primary event in carbon dioxide fixation, as well as the oxidative fragmentation of the pentose substrate in the photorespiration process. Both reactions occur simultaneously and in competition at the same active site. Binds to abscisic acid (ABA) which has weakly inhibits carboxylation and more strongly inhibits enzyme activation. The chain is Ribulose bisphosphate carboxylase large chain from Spinacia oleracea (Spinach).